The chain runs to 362 residues: Peptide chain release factor 1 (362 aa).

Residue Q236 is modified to N5-methylglutamine.

Belongs to the prokaryotic/mitochondrial release factor family. In terms of processing, methylated by PrmC. Methylation increases the termination efficiency of RF1.

The protein resides in the cytoplasm. In terms of biological role, peptide chain release factor 1 directs the termination of translation in response to the peptide chain termination codons UAG and UAA. This Lactobacillus johnsonii (strain CNCM I-12250 / La1 / NCC 533) protein is Peptide chain release factor 1.